The sequence spans 474 residues: Gasdermin-C (474 aa).

A triggers pyroptosis region spans residues 1–237 (MLYTFDQVSK…TCAILLSANA (237 aa)).

The protein belongs to the gasdermin family. As to quaternary structure, homooligomer; homooligomeric ring-shaped pore complex containing 27-28 subunits when inserted in the membrane. In terms of processing, cleavage by CASP8 relieves autoinhibition by releasing the N-terminal moiety (Gasdermin-C, N-terminal) that initiates pyroptosis. Post-translationally, palmitoylated.

The protein localises to the cytoplasm. It is found in the cytosol. The protein resides in the cell membrane. With respect to regulation, the full-length protein before cleavage is inactive: intramolecular interactions between N- and C-terminal domains mediate autoinhibition in the absence of activation signal. The intrinsic pyroptosis-inducing activity is carried by the released N-terminal moiety (Gasdermin-C, N-terminal) following cleavage by caspase CASP8. In terms of biological role, this form constitutes the precursor of the pore-forming protein: upon cleavage, the released N-terminal moiety (Gasdermin-C, N-terminal) binds to membranes and forms pores, triggering pyroptosis. Functionally, pore-forming protein that causes membrane permeabilization and pyroptosis. Produced by the cleavage of gasdermin-C by caspase CASP8 in response to death signals. After cleavage, moves to the plasma membrane where it strongly binds to membrane inner leaflet lipids. Homooligomerizes within the membrane and forms pores of 10-15 nanometers (nm) of inner diameter, triggering pyroptosis. This chain is Gasdermin-C, found in Rattus norvegicus (Rat).